The sequence spans 148 residues: MEVILLEKVANLGNLGDKVNIKGGYARNFLLPQGKATVATAENVAAFEARRAELEKAAAEKKAAAEARAAQLSELVVTLGAHAGDEGKLFGSIGTRDIAEAVSAAGYPLEKAEVRLPNGALRNTGEFDVAVHLHTDVETTLKLIIVAE.

The protein belongs to the bacterial ribosomal protein bL9 family.

Its function is as follows. Binds to the 23S rRNA. The sequence is that of Large ribosomal subunit protein bL9 from Pseudomonas aeruginosa (strain LESB58).